A 546-amino-acid chain; its full sequence is Chaperonin GroEL 2 (546 aa).

ATP-binding positions include 30-33 (TLGP), K51, 87-91 (DGTTT), G415, 479-481 (NAA), and D495. Residues 524 to 546 (APKDAPPAAPAGVPGAGGPGFDF) form a disordered region. The segment covering 537–546 (PGAGGPGFDF) has biased composition (gly residues).

This sequence belongs to the chaperonin (HSP60) family. Forms a cylinder of 14 subunits composed of two heptameric rings stacked back-to-back. Interacts with the co-chaperonin GroES.

Its subcellular location is the cytoplasm. It carries out the reaction ATP + H2O + a folded polypeptide = ADP + phosphate + an unfolded polypeptide.. Its function is as follows. Together with its co-chaperonin GroES, plays an essential role in assisting protein folding. The GroEL-GroES system forms a nano-cage that allows encapsulation of the non-native substrate proteins and provides a physical environment optimized to promote and accelerate protein folding. This chain is Chaperonin GroEL 2, found in Burkholderia pseudomallei (strain 1710b).